The chain runs to 134 residues: L-ectoine synthase (134 aa).

This sequence belongs to the ectoine synthase family.

It catalyses the reaction (2S)-4-acetamido-2-aminobutanoate = L-ectoine + H2O. Its pathway is amine and polyamine biosynthesis; ectoine biosynthesis; L-ectoine from L-aspartate 4-semialdehyde: step 3/3. In terms of biological role, catalyzes the circularization of gamma-N-acetyl-alpha,gamma-diaminobutyric acid (ADABA) to ectoine (1,4,5,6-tetrahydro-2-methyl-4-pyrimidine carboxylic acid), which is an excellent osmoprotectant. In Shouchella clausii (strain KSM-K16) (Alkalihalobacillus clausii), this protein is L-ectoine synthase.